We begin with the raw amino-acid sequence, 85 residues long: Large ribosomal subunit protein bL27 (85 aa).

A disordered region spans residues 1–21 (MAHKKAGGSTRNGRDSESKRL).

This sequence belongs to the bacterial ribosomal protein bL27 family.

This Pseudomonas entomophila (strain L48) protein is Large ribosomal subunit protein bL27.